Here is a 243-residue protein sequence, read N- to C-terminus: uncharacterized protein (243 aa).

A disordered region spans residues 157 to 181; sequence SEETKEQPDATTSEKSRSPECPKTT.

This is an uncharacterized protein from Rattus norvegicus (Rat).